The sequence spans 268 residues: Mitochondrial distribution and morphology protein 12 (268 aa).

The 266-residue stretch at 1-266 (MSIDLEWCKL…FPNFHTIVMA (266 aa)) folds into the SMP-LTD domain. The interval 66-136 (EDDEEGSDRG…PPPAENPHPN (71 aa)) is disordered. Polar residues predominate over residues 102–111 (PATNVTSSLD). The segment covering 112–121 (TRSDQPDDQK) has biased composition (basic and acidic residues).

This sequence belongs to the MDM12 family. Component of the ER-mitochondria encounter structure (ERMES) or MDM complex, composed of MMM1, MDM10, MDM12 and MDM34. An MMM1 homodimer associates with one molecule of MDM12 on each side in a pairwise head-to-tail manner, and the SMP-LTD domains of MMM1 and MDM12 generate a continuous hydrophobic tunnel for phospholipid trafficking.

Its subcellular location is the mitochondrion outer membrane. The protein resides in the endoplasmic reticulum membrane. Its function is as follows. Component of the ERMES/MDM complex, which serves as a molecular tether to connect the endoplasmic reticulum (ER) and mitochondria. Components of this complex are involved in the control of mitochondrial shape and protein biogenesis, and function in nonvesicular lipid trafficking between the ER and mitochondria. MDM12 is required for the interaction of the ER-resident membrane protein MMM1 and the outer mitochondrial membrane-resident beta-barrel protein MDM10. The MDM12-MMM1 subcomplex functions in the major beta-barrel assembly pathway that is responsible for biogenesis of all mitochondrial outer membrane beta-barrel proteins, and acts in a late step after the SAM complex. The MDM10-MDM12-MMM1 subcomplex further acts in the TOM40-specific pathway after the action of the MDM12-MMM1 complex. Essential for establishing and maintaining the structure of mitochondria and maintenance of mtDNA nucleoids. This is Mitochondrial distribution and morphology protein 12 from Laccaria bicolor (strain S238N-H82 / ATCC MYA-4686) (Bicoloured deceiver).